We begin with the raw amino-acid sequence, 731 residues long: EF-hand calcium-binding domain-containing protein 4B (731 aa).

The interval 1 to 45 is disordered; that stretch reads MAAPDGRVVSRPQRLGQGSGQGPKGSGACLHPLDSLEQKETQEQT. The EF-hand domain maps to 84-119; the sequence is LSLEELEDVFDALDADGNGYLTPQEFTTGFSHFFFS. Residues D97, D99, N101, Y103, and E108 each contribute to the Ca(2+) site. Residues 201–382 adopt a coiled-coil conformation; it reads LTRIISQLQE…RERNKHLRDE (182 aa). The proline-rich domain (PRD) which mediates interaction with VAV1 stretch occupies residues 349–540; it reads MEVYRVTESL…ALCKEESSPS (192 aa). 2 disordered regions span residues 426 to 466 and 494 to 528; these read SEEE…PYPR and CSEE…QPVG. GTP is bound by residues S554, V556, G557, K558, T559, S560, S571, P572, and T577. T559 contributes to the Mg(2+) binding site. Positions 572 to 580 are switch-I; sequence PGMAATVGI. Positions 577 and 600 each coordinate Mg(2+). Residues G603, N658, K659, D661, and A689 each coordinate GTP. The interval 603–619 is switch-II; that stretch reads GQERYRCITQQFFRKAD. C729 carries the S-geranylgeranyl cysteine lipid modification.

Belongs to the EFCAB4 family. Interacts with ORAI1 and STIM1; the interaction is direct and takes place in absence of Ca(2+). Forms a complex with ORAI1 and STIM1 at low concentration of Ca(2+), the complex dissociates at elevated Ca(2+) concentrations. Interacts with ORAI2 and ORAI3. As to quaternary structure, interacts with DYNC1H1. Interacts with the dynein-dynactin complex in a Ca(2+)-dependent manner. Interacts with VAV1. It depends on Mg(2+) as a cofactor. Expressed in the Jurkat T-cell line. As to expression, expressed in endothelial cells. Expressed in Weibel-Palade bodies (which are P-selectin/SELP negative) in endothelial cells. Expressed in the Jurkat T-cell line.

The protein localises to the cytoplasm. It localises to the cytoskeleton. Its subcellular location is the microtubule organizing center. It is found in the cell membrane. The protein resides in the golgi apparatus membrane. The protein localises to the golgi apparatus. It localises to the trans-Golgi network membrane. Its subcellular location is the vesicle. It catalyses the reaction GTP + H2O = GDP + phosphate + H(+). Functionally, ca(2+)-binding protein that plays a key role in store-operated Ca(2+) entry (SOCE) in T-cells by regulating CRAC channel activation. Acts as a cytoplasmic calcium-sensor that facilitates the clustering of ORAI1 and STIM1 at the junctional regions between the plasma membrane and the endoplasmic reticulum upon low Ca(2+) concentration. It thereby regulates CRAC channel activation, including translocation and clustering of ORAI1 and STIM1. Upon increase of cytoplasmic Ca(2+) resulting from opening of CRAC channels, dissociates from ORAI1 and STIM1, thereby destabilizing the ORAI1-STIM1 complex. Rab GTPase that mediates the trafficking of Weibel-Palade bodies (WPBs) to microtubule organizing center (MTOC) in endothelial cells in response to acute inflammatory stimuli. During histamine (but not thrombin) stimulation of endothelial cells, the dynein-bound form induces retrograde transport of a subset of WPBs along microtubules to the MTOC in a Ca(2+)-independent manner and its GTPase activity is essential for this function. Ca(2+)-regulated dynein adapter protein that activates dynein-mediated transport and dynein-dynactin motility on microtubules and regulates endosomal trafficking of CD47. Acts as an intracellular signaling module bridging two important T-cell receptor (TCR) signaling pathways, Ca(2+)-NFAT and JNK, to affect T-cell activation. In resting T-cells, is predominantly localized near TGN network in a GTP-bound form, upon TCR stimulation, localizes at the immunological synapse via interaction with VAV1 to activate downstream Ca(2+)-NFAT and JNK signaling pathways. Plays a role in T-helper 1 (Th1) cell differentiation and T-helper 17 (Th17) cell effector function. Plays a role in store-operated Ca(2+) entry (SOCE) in T-cells by regulating CRAC channel activation. This is EF-hand calcium-binding domain-containing protein 4B from Homo sapiens (Human).